The following is a 226-amino-acid chain: Enolase-phosphatase E1 (226 aa).

It belongs to the HAD-like hydrolase superfamily. MasA/MtnC family. As to quaternary structure, monomer. Mg(2+) serves as cofactor.

It catalyses the reaction 5-methylsulfanyl-2,3-dioxopentyl phosphate + H2O = 1,2-dihydroxy-5-(methylsulfanyl)pent-1-en-3-one + phosphate. It functions in the pathway amino-acid biosynthesis; L-methionine biosynthesis via salvage pathway; L-methionine from S-methyl-5-thio-alpha-D-ribose 1-phosphate: step 3/6. The protein operates within amino-acid biosynthesis; L-methionine biosynthesis via salvage pathway; L-methionine from S-methyl-5-thio-alpha-D-ribose 1-phosphate: step 4/6. Bifunctional enzyme that catalyzes the enolization of 2,3-diketo-5-methylthiopentyl-1-phosphate (DK-MTP-1-P) into the intermediate 2-hydroxy-3-keto-5-methylthiopentenyl-1-phosphate (HK-MTPenyl-1-P), which is then dephosphorylated to form the acireductone 1,2-dihydroxy-3-keto-5-methylthiopentene (DHK-MTPene). The sequence is that of Enolase-phosphatase E1 from Shewanella sp. (strain ANA-3).